Reading from the N-terminus, the 81-residue chain is Photosystem I iron-sulfur center (81 aa).

4Fe-4S ferredoxin-type domains follow at residues 2-31 and 39-68; these read SHTV…MVPW and IASS…IRVY. Residues Cys-11, Cys-14, Cys-17, Cys-21, Cys-48, Cys-51, Cys-54, and Cys-58 each contribute to the [4Fe-4S] cluster site.

As to quaternary structure, the cyanobacterial PSI reaction center is composed of one copy each of PsaA,B,C,D,E,F,I,J,K,L,M and X, and forms trimeric complexes. The cofactor is [4Fe-4S] cluster.

It localises to the cellular thylakoid membrane. It carries out the reaction reduced [plastocyanin] + hnu + oxidized [2Fe-2S]-[ferredoxin] = oxidized [plastocyanin] + reduced [2Fe-2S]-[ferredoxin]. In terms of biological role, apoprotein for the two 4Fe-4S centers FA and FB of photosystem I (PSI); essential for photochemical activity. FB is the terminal electron acceptor of PSI, donating electrons to ferredoxin. The C-terminus interacts with PsaA/B/D and helps assemble the protein into the PSI complex. Required for binding of PsaD and PsaE to PSI. PSI is a plastocyanin/cytochrome c6-ferredoxin oxidoreductase, converting photonic excitation into a charge separation, which transfers an electron from the donor P700 chlorophyll pair to the spectroscopically characterized acceptors A0, A1, FX, FA and FB in turn. The chain is Photosystem I iron-sulfur center from Microchaete diplosiphon (Fremyella diplosiphon).